A 274-amino-acid chain; its full sequence is Protein YehF (274 aa).

The WGR domain maps to 2 to 78 (RHFIYQDEKS…KDNSLQPSQT (77 aa)).

In terms of biological role, has been implicated in selenate reduction; a mini-Tn10 insertion mutant in 'molR', (which was mapped to 47.3 centisomes i.e. this locus), is defective in the reduction of selenate. The chain is Protein YehF (yehF) from Escherichia coli (strain K12).